A 790-amino-acid chain; its full sequence is RNA-directed RNA polymerase 2a (790 aa).

Positions 524-639 (FHFKEIDFSK…GTVEELPRDQ (116 aa)) constitute a RdRp catalytic domain. The disordered stretch occupies residues 771–790 (IKPRRVKKSHSDARSRARRA). Residues 779–790 (SHSDARSRARRA) are compositionally biased toward basic and acidic residues.

Belongs to the bromoviridae 2a family. In terms of assembly, interacts with replication protein 1a.

The enzyme catalyses RNA(n) + a ribonucleoside 5'-triphosphate = RNA(n+1) + diphosphate. In terms of biological role, RNA-dependent RNA polymerase which replicates the viral genome composed of 3 RNA segments, RNA1, RNA2 and RNA3. The protein is RNA-directed RNA polymerase 2a of Alfalfa mosaic virus (AMV).